A 386-amino-acid polypeptide reads, in one-letter code: Protein salvador homolog 1 (386 aa).

2 positions are modified to phosphoserine: serine 95 and serine 137. 2 WW domains span residues 200 to 233 (LPLP…HPLE) and 235 to 268 (EGLP…HPCA). The residue at position 211 (threonine 211) is a Phosphothreonine. An SARAH domain is found at 322–369 (ILKWELFQLADLDTYQGMLKLLFMKELEQIVKLYEAYRQALLTELENR). A coiled-coil region spans residues 345–374 (MKELEQIVKLYEAYRQALLTELENRKQRQQ).

Homodimer. Stabilized through interaction with STK3/MST2 or STK4/MST1. Interacts (via SARAH domain) with isoform 1 of NEK2. Interacts with ESR1 only in the presence of STK3/MST2. Interacts with WTIP and AJUBA. Post-translationally, phosphorylated by STK3/MST2 and STK4/MST1. Phosphorylation is not required for SAV1 stability and may increase the number of protein binding sites on the scaffold molecule. Ubiquitously expressed in adult tissues with the highest level found in testis.

The protein resides in the nucleus. The protein localises to the cytoplasm. Its function is as follows. Regulator of STK3/MST2 and STK4/MST1 in the Hippo signaling pathway which plays a pivotal role in organ size control and tumor suppression by restricting proliferation and promoting apoptosis. The core of this pathway is composed of a kinase cascade wherein STK3/MST2 and STK4/MST1, in complex with its regulatory protein SAV1, phosphorylates and activates LATS1/2 in complex with its regulatory protein MOB1, which in turn phosphorylates and inactivates YAP1 oncoprotein and WWTR1/TAZ. Phosphorylation of YAP1 by LATS1/2 inhibits its translocation into the nucleus to regulate cellular genes important for cell proliferation, cell death, and cell migration. SAV1 is required for STK3/MST2 and STK4/MST1 activation and promotes cell-cycle exit and terminal differentiation in developing epithelial tissues. Plays a role in centrosome disjunction by regulating the localization of NEK2 to centrosomes, and its ability to phosphorylate CROCC and CEP250. In conjunction with STK3/MST2, activates the transcriptional activity of ESR1 through the modulation of its phosphorylation. In Mus musculus (Mouse), this protein is Protein salvador homolog 1 (Sav1).